Reading from the N-terminus, the 988-residue chain is Voltage-gated delayed rectifier potassium channel KCNH5 (988 aa).

At 1–217 (MPGGKRGLVA…LHYCAFKTTW (217 aa)) the chain is on the cytoplasmic side. The PAS domain occupies 14-86 (TFLENIVRRS…TIEKVRQTFD (73 aa)). Residues 91 to 143 (NCFEVLLYKKNRTPVWFYMQIAPIRNEHEKVVLFLCTFKDITLFKQPIEDDST) enclose the PAC domain. The chain crosses the membrane as a helical span at residues 218–238 (DWVILILTFYTAIMVPYNVSF). Over 239–243 (KTKQN) the chain is Extracellular. The chain crosses the membrane as a helical span at residues 244-264 (NIAWLVLDSVVDVIFLVDIVL). Residues 265-291 (NFHTTFVGPGGEVISDPKLIRMNYLKT) are Cytoplasmic-facing. The chain crosses the membrane as a helical span at residues 292–312 (WFVIDLLSCLPYDIINAFENV). Residues 313 to 319 (DEGISSL) are Extracellular-facing. A helical; Voltage-sensor transmembrane segment spans residues 320 to 340 (FSSLKVVRLLRLGRVARKLDH). At 341–346 (YLEYGA) the chain is on the cytoplasmic side. The chain crosses the membrane as a helical span at residues 347–367 (AVLVLLVCVFGLVAHWLACIW). Residues 368-419 (YSIGDYEVIDEVTNTIQIDSWLYQLALSIGTPYRYNTSAGIWEGGPSKDSLY) lie on the Extracellular side of the membrane. N-linked (GlcNAc...) asparagine glycosylation is present at Asn-403. The segment at residues 420 to 440 (VSSLYFTMTSLTTIGFGNIAP) is an intramembrane region (pore-forming). The Selectivity filter signature appears at 432 to 437 (TIGFGN). The Extracellular segment spans residues 441 to 446 (TTDVEK). A helical membrane pass occupies residues 447–467 (MFSVAMMMVGSLLYATIFGNV). The Cytoplasmic portion of the chain corresponds to 468-988 (TTIFQQMYAN…PESDKDEINF (521 aa)). 550 to 668 (AFRLASDGCL…SFSRNLTLTC (119 aa)) is a binding site for a nucleoside 3',5'-cyclic phosphate. The calmodulin-binding stretch occupies residues 704-715 (HPVRKLFQKFKQ). The interval 721 to 741 (IQGSAQSDPERSQLQVESRPL) is disordered. Polar residues predominate over residues 723 to 741 (GSAQSDPERSQLQVESRPL). Lys-785 is covalently cross-linked (Glycyl lysine isopeptide (Lys-Gly) (interchain with G-Cter in ubiquitin)). Positions 838-893 (GLLSEDPKGSDSENSVTKNPLRKTDSCDSGITKSDLRLDKAGEARSPLEHSPSQAD) are disordered. A compositionally biased stretch (basic and acidic residues) spans 871-885 (SDLRLDKAGEARSPL). The residue at position 883 (Ser-883) is a Phosphoserine. The tract at residues 909 to 948 (TLQEVKHELKEDIQLLSCRMTALEKQVAEILKLLSEKSVP) is CAD (involved in subunit assembly).

This sequence belongs to the potassium channel family. H (Eag) (TC 1.A.1.20) subfamily. Kv10.2/KCNH5 sub-subfamily. In terms of assembly, homotetramer. The potassium channel is probably composed of a homo- or heterotetrameric complex of pore-forming alpha subunits that can associate with modulating beta subunits. Heteromultimer with KCNH1/EAG.

It localises to the membrane. It catalyses the reaction K(+)(in) = K(+)(out). Pore-forming (alpha) subunit of a voltage-gated delayed rectifier potassium channel that mediates outward-rectifying potassium currents which, on depolarization, reaches a steady-state level and do not inactivate. The kinetic is characterized by a slow activation time course and a small voltage dependence of the activation time constants, therefore, starts to open at more negative voltages. The activation kinetics depend on the prepulse potential and external divalent cation concentration. The time course of activation is biphasic with a fast and a slowly activating current component. With negative prepulses, the current activation is delayed and slowed down several fold, whereas more positive prepulses speed up activation, therefore the activation rate depends on holding potential. The sequence is that of Voltage-gated delayed rectifier potassium channel KCNH5 from Mus musculus (Mouse).